Reading from the N-terminus, the 160-residue chain is Phosphopantetheine adenylyltransferase (160 aa).

Thr10 contacts substrate. ATP-binding positions include 10–11 (TF) and His18. Residues Lys42, Leu74, and Arg88 each contribute to the substrate site. ATP is bound by residues 89–91 (GLR), Glu99, and 124–130 (NSFISST).

This sequence belongs to the bacterial CoaD family. Homohexamer. Requires Mg(2+) as cofactor.

It localises to the cytoplasm. It carries out the reaction (R)-4'-phosphopantetheine + ATP + H(+) = 3'-dephospho-CoA + diphosphate. The protein operates within cofactor biosynthesis; coenzyme A biosynthesis; CoA from (R)-pantothenate: step 4/5. In terms of biological role, reversibly transfers an adenylyl group from ATP to 4'-phosphopantetheine, yielding dephospho-CoA (dPCoA) and pyrophosphate. The polypeptide is Phosphopantetheine adenylyltransferase (Shewanella piezotolerans (strain WP3 / JCM 13877)).